Reading from the N-terminus, the 457-residue chain is G-protein coupled receptor 135 (457 aa).

Residues 1–26 are disordered; sequence MEEQARPPGRPAASATLQGSAHPGGA. The Extracellular segment spans residues 1-64; it reads MEEQARPPGR…EAAGSRGPAP (64 aa). A glycan (N-linked (GlcNAc...) asparagine) is linked at Asn47. Residues 65-85 traverse the membrane as a helical segment; it reads LLWHGAAVAAQALVLLLIFLL. Residues 86 to 109 lie on the Cytoplasmic side of the membrane; sequence SSLGNCAVMGVIVKHRQLRTVTNA. A helical membrane pass occupies residues 110 to 130; sequence FILSLSLSDLLTALLCLPAAF. The Extracellular segment spans residues 131–156; that stretch reads LDLFAPPGDSGPWRSFCAASRFFSSC. A helical membrane pass occupies residues 157–177; it reads FGIVSTFSVALISLDRYCAIV. Residues 178–189 lie on the Cytoplasmic side of the membrane; the sequence is RPPRDKLGRRRA. Residues 190-210 traverse the membrane as a helical segment; the sequence is LQLLAGAWLAALGFSLPWDLL. At 211–235 the chain is on the extracellular side; the sequence is RAPREPPAPQSFHRCLYRTSPDPAQ. Residues 236–256 traverse the membrane as a helical segment; the sequence is LGVAYSVGLVVACYLLPFLLM. The Cytoplasmic segment spans residues 257 to 295; sequence CFCRYHICKTVRLSDVRVRPMTTYARVLRFFSEVRTATT. A helical transmembrane segment spans residues 296-316; it reads VLIMIIFVMCCWGPYCFLVLL. The Extracellular segment spans residues 317–329; the sequence is AATRQGQATQAPS. A helical transmembrane segment spans residues 330–350; sequence LLNVAAVWLTWANGAINPVIY. The Cytoplasmic portion of the chain corresponds to 351–457; the sequence is AIRNPNISML…HNSETRDSSI (107 aa).

Belongs to the G-protein coupled receptor 1 family. Interacts with MTNR1B. Interacts with ARRB1 and ARRB2 in a spontaneous and agonist-independent manner; leading to the internalization of GPR135 in the endosomal compartment.

Its subcellular location is the cell membrane. It localises to the endosome membrane. In terms of biological role, orphan receptor. Has spontaneous activity for beta-arrestin recruitment. Shows a reciprocal regulatory interaction with the melatonin receptor MTNR1B most likely through receptor heteromerization. This Mus musculus (Mouse) protein is G-protein coupled receptor 135 (Gpr135).